A 180-amino-acid polypeptide reads, in one-letter code: UPF0397 protein SSA_0592 (180 aa).

A run of 5 helical transmembrane segments spans residues 9-29 (VVATGIGAALFVVIGMINIPT), 45-65 (LFSVIFGPIVGFLMGFIGHAI), 72-92 (GGLWWFWIAGSGVFGLLVGFF), 113-133 (LIQFGANAIAWLIGPIGDVIV), and 146-166 (IVAILVNSATVAVIGTVLLTA).

Belongs to the UPF0397 family.

The protein resides in the cell membrane. This Streptococcus sanguinis (strain SK36) protein is UPF0397 protein SSA_0592.